The following is a 436-amino-acid chain: 3-ketoacyl-CoA thiolase (436 aa).

The active-site Acyl-thioester intermediate is C99. Catalysis depends on proton acceptor residues H392 and C422.

This sequence belongs to the thiolase-like superfamily. Thiolase family. Heterotetramer of two alpha chains (FadJ) and two beta chains (FadI).

It is found in the cytoplasm. The enzyme catalyses an acyl-CoA + acetyl-CoA = a 3-oxoacyl-CoA + CoA. It functions in the pathway lipid metabolism; fatty acid beta-oxidation. Functionally, catalyzes the final step of fatty acid oxidation in which acetyl-CoA is released and the CoA ester of a fatty acid two carbons shorter is formed. This is 3-ketoacyl-CoA thiolase from Shewanella oneidensis (strain ATCC 700550 / JCM 31522 / CIP 106686 / LMG 19005 / NCIMB 14063 / MR-1).